A 340-amino-acid polypeptide reads, in one-letter code: Adenosine kinase (340 aa).

D293 is a catalytic residue.

This sequence belongs to the carbohydrate kinase PfkB family. Mg(2+) serves as cofactor.

The enzyme catalyses adenosine + ATP = AMP + ADP + H(+). The protein operates within purine metabolism; AMP biosynthesis via salvage pathway; AMP from adenosine: step 1/1. Functionally, ATP dependent phosphorylation of adenosine and other related nucleoside analogs to monophosphate derivatives. ADO1 does not play a major role in adenine utilization in yeast. Its physiological role could primarily be to recycle adenosine produced by the methyl cycle. The protein is Adenosine kinase of Saccharomyces cerevisiae (strain ATCC 204508 / S288c) (Baker's yeast).